We begin with the raw amino-acid sequence, 688 residues long: Eukaryotic translation initiation factor 3 subunit B (688 aa).

Residues 1–28 form a disordered region; that stretch reads MAKKKGDQYDSDGAEDQDYDEEPVFEDP. A compositionally biased stretch (acidic residues) spans 9–25; the sequence is YDSDGAEDQDYDEEPVF. In terms of domain architecture, RRM spans 57-141; it reads NVIVVDNIPV…HTLLVNLFSD (85 aa). 6 WD repeats span residues 208 to 246, 247 to 287, 291 to 329, 332 to 367, 440 to 482, and 527 to 572; these read RERFTETYVKWSPLGTYIVTFHKQGVVIWGGSSFTKINK, FAHS…EKRS, DGSSNMSMFRWSHDDKYVARMGDNAIHVYETNTFYLLDK, IKVQGIRNFSWSPTDNIIAYWMSEDIDAPARVTLLE, EVKE…EPTM, and GDHY…KRVN. Residues 612–643 are a coiled coil; it reads DRVRMTRASKELLEKRAKLREQFVEYRAKRVN.

This sequence belongs to the eIF-3 subunit B family. In terms of assembly, component of the eukaryotic translation initiation factor 3 (eIF-3) complex.

The protein localises to the cytoplasm. Its function is as follows. RNA-binding component of the eukaryotic translation initiation factor 3 (eIF-3) complex, which is involved in protein synthesis of a specialized repertoire of mRNAs and, together with other initiation factors, stimulates binding of mRNA and methionyl-tRNAi to the 40S ribosome. The eIF-3 complex specifically targets and initiates translation of a subset of mRNAs involved in cell proliferation. This chain is Eukaryotic translation initiation factor 3 subunit B, found in Culex quinquefasciatus (Southern house mosquito).